Consider the following 691-residue polypeptide: MGKNIIAGSISSSIHKSYEIGSQIGNGKFAQVHSGTNKSTGKKSAIKIMKKSIVEESAIIKEIEMMTEINHQNIIKLQEVYETDNEVLLVLELVTGGELFDKIVEREFYTEQDASTLIGTVTKVIQYLHSKDIVHCDLKPENLLYSDNSDQAIIKLCDFGLSQRCGSGSPLRSLVGTLTYMAPEISSCTGYGKPVDLWSIGVISYILLCGFPPFDETTGYVLEFPSPEWDNISDSAKSLIKGLLNNDPSKRFTIDQTLKHPWIAGTTCGKNSIVGTLKTLREFNTLRRTNGGNTTMGHNKQSRSTVFELFPSLTPIKSNDENNNNNNNNNNNNNNNEILDKKSNENENENENDKIKINLELNLNNNVNNNNNNNNNTVILENNNNNLEKISTTKTTTTTSTINDSINKTKIQLMNSLDFENDSSSSETYSSSSPIENGGGGGDKFTSPELSSLSIDLGCASDQLNSDKEKIIEQLKNEKSLLQKELLEIKRQSPVPSPSSSFLNNHLQQQHNNNINNNNNNINNGGSTSINNGNGTIERQFRPIHMSKDSDSGSYENLLLGTSPFVKNHNNNNINNNNNNFCHSRNSSFGYGNSYNSSNGGSGCSSSSDESTGGSFKKDKSKYGVDRICLDLQSEFEKLSLPKETMDKLASVLSNYKQKNQEKSLKVKYEKQKDKYKKLKSQLKKDKSLLK.

One can recognise a Protein kinase domain in the interval 18 to 263 (YEIGSQIGNG…IDQTLKHPWI (246 aa)). ATP-binding positions include 24–32 (IGNGKFAQV) and K47. Catalysis depends on D137, which acts as the Proton acceptor. Disordered stretches follow at residues 314-350 (TPIK…ENEN), 420-447 (ENDS…KFTS), 510-536 (QHNN…GNGT), and 600-620 (GGSG…KKDK). Residues 322 to 336 (NNNNNNNNNNNNNNN) show a composition bias toward low complexity. Residues 338–350 (ILDKKSNENENEN) show a composition bias toward basic and acidic residues. Composition is skewed to low complexity over residues 423–433 (SSSSETYSSSS), 512–536 (NNNI…GNGT), and 600–615 (GGSG…TGGS). Residues 642-691 (PKETMDKLASVLSNYKQKNQEKSLKVKYEKQKDKYKKLKSQLKKDKSLLK) are a coiled coil.

It belongs to the protein kinase superfamily. CAMK Ser/Thr protein kinase family.

The enzyme catalyses L-seryl-[protein] + ATP = O-phospho-L-seryl-[protein] + ADP + H(+). The catalysed reaction is L-threonyl-[protein] + ATP = O-phospho-L-threonyl-[protein] + ADP + H(+). This is Probable serine/threonine-protein kinase pXi (pXi) from Dictyostelium discoideum (Social amoeba).